We begin with the raw amino-acid sequence, 528 residues long: GMP synthase [glutamine-hydrolyzing] (528 aa).

The Glutamine amidotransferase type-1 domain occupies 13 to 204 (SILILDFGSQ…VYKISCCAAD (192 aa)). Cys90 (nucleophile) is an active-site residue. Residues His178 and Glu180 contribute to the active site. A GMPS ATP-PPase domain is found at 205–403 (WTTETYIEET…LGLPAEIIKR (199 aa)). 232 to 238 (SGGVDSS) serves as a coordination point for ATP.

Homodimer.

It catalyses the reaction XMP + L-glutamine + ATP + H2O = GMP + L-glutamate + AMP + diphosphate + 2 H(+). It participates in purine metabolism; GMP biosynthesis; GMP from XMP (L-Gln route): step 1/1. Catalyzes the synthesis of GMP from XMP. The chain is GMP synthase [glutamine-hydrolyzing] from Prochlorococcus marinus (strain MIT 9215).